The following is a 287-amino-acid chain: 4-hydroxybenzoate octaprenyltransferase (287 aa).

A run of 9 helical transmembrane segments spans residues Val21 to Ala41, Phe44 to Val64, Val91 to Leu111, Leu112 to Phe132, Leu139 to Thr159, Val160 to Val180, Leu211 to Leu231, Tyr235 to Ile255, and Cys263 to Leu283.

Belongs to the UbiA prenyltransferase family. It depends on Mg(2+) as a cofactor.

The protein localises to the cell inner membrane. It carries out the reaction all-trans-octaprenyl diphosphate + 4-hydroxybenzoate = 4-hydroxy-3-(all-trans-octaprenyl)benzoate + diphosphate. It participates in cofactor biosynthesis; ubiquinone biosynthesis. In terms of biological role, catalyzes the prenylation of para-hydroxybenzoate (PHB) with an all-trans polyprenyl group. Mediates the second step in the final reaction sequence of ubiquinone-8 (UQ-8) biosynthesis, which is the condensation of the polyisoprenoid side chain with PHB, generating the first membrane-bound Q intermediate 3-octaprenyl-4-hydroxybenzoate. The sequence is that of 4-hydroxybenzoate octaprenyltransferase from Coxiella burnetii (strain CbuK_Q154) (Coxiella burnetii (strain Q154)).